The chain runs to 347 residues: GMP reductase (347 aa).

108–131 (ADFAKTAQILALNPALNFVCIDVA) is an NADP(+) binding site. 2 residues coordinate K(+): Gly181 and Gly183. Cys186 acts as the Thioimidate intermediate in catalysis. An NADP(+)-binding site is contributed by 216–239 (IVSDGGCTMPGDVAKAFGGGADFV).

Belongs to the IMPDH/GMPR family. GuaC type 1 subfamily. Homotetramer.

It catalyses the reaction IMP + NH4(+) + NADP(+) = GMP + NADPH + 2 H(+). Its function is as follows. Catalyzes the irreversible NADPH-dependent deamination of GMP to IMP. It functions in the conversion of nucleobase, nucleoside and nucleotide derivatives of G to A nucleotides, and in maintaining the intracellular balance of A and G nucleotides. This Salmonella arizonae (strain ATCC BAA-731 / CDC346-86 / RSK2980) protein is GMP reductase.